The following is a 396-amino-acid chain: Phosphoglycerate kinase (396 aa).

Substrate contacts are provided by residues aspartate 21–asparagine 23, arginine 36, histidine 59–arginine 62, arginine 113, and arginine 146. ATP-binding positions include lysine 197, glutamate 319, and glycine 345 to threonine 348.

It belongs to the phosphoglycerate kinase family. As to quaternary structure, monomer.

The protein localises to the cytoplasm. It carries out the reaction (2R)-3-phosphoglycerate + ATP = (2R)-3-phospho-glyceroyl phosphate + ADP. Its pathway is carbohydrate degradation; glycolysis; pyruvate from D-glyceraldehyde 3-phosphate: step 2/5. The chain is Phosphoglycerate kinase from Legionella pneumophila (strain Corby).